Reading from the N-terminus, the 206-residue chain is dCTP deaminase, dUMP-forming (206 aa).

DCTP contacts are provided by residues 117-122 (RSSFGR), D135, 143-145 (TLE), Q163, Y177, K184, and Q188. E145 acts as the Proton donor/acceptor in catalysis.

The protein belongs to the dCTP deaminase family. As to quaternary structure, homotrimer.

It catalyses the reaction dCTP + 2 H2O = dUMP + NH4(+) + diphosphate. The protein operates within pyrimidine metabolism; dUMP biosynthesis; dUMP from dCTP: step 1/1. Its function is as follows. Bifunctional enzyme that catalyzes both the deamination of dCTP to dUTP and the hydrolysis of dUTP to dUMP without releasing the toxic dUTP intermediate. In Methanococcus maripaludis (strain C6 / ATCC BAA-1332), this protein is dCTP deaminase, dUMP-forming.